The following is a 2193-amino-acid chain: Genome polyprotein (2193 aa).

A lipid anchor (N-myristoyl glycine; by host) is attached at glycine 2. Residues 2 to 1503 (GAQVSTQKTG…HVSRAFICLQ (1502 aa)) lie on the Cytoplasmic side of the membrane. The interval 565 to 582 (QLLQGDVEEAVNRAVARV) is amphipathic alpha-helix. Residues histidine 880 and aspartate 898 each act as for protease 2A activity in the active site. Positions 915 and 917 each coordinate Zn(2+). Catalysis depends on cysteine 969, which acts as the For protease 2A activity. Zn(2+) is bound by residues cysteine 975 and histidine 977. The tract at residues 1109–1181 (SNGWLKKFTE…EQSAPSQSDQ (73 aa)) is membrane-binding. Residues 1109–1247 (SNGWLKKFTE…SPGAGKSVAT (139 aa)) are oligomerization. An RNA-binding region spans residues 1130–1134 (AIKIQ). Residues 1213-1369 (EKKMSNYIQF…SMYSQNGKIN (157 aa)) enclose the SF3 helicase domain. Positions 1377, 1389, and 1394 each coordinate Zn(2+). The C4-type; degenerate zinc-finger motif lies at 1377-1394 (CDEECCPVNFKRCCPLVC). Positions 1421–1428 (EYNHRHSV) are RNA-binding. Residues 1432-1437 (LEALFQ) form an oligomerization region. Residues 1504–1519 (ALTTFVSVAGIIYIIY) lie within the membrane without spanning it. Over 1520 to 2193 (KLFAGFQGAY…TLRRKWLDSF (674 aa)) the chain is Cytoplasmic. Tyrosine 1529 is subject to O-(5'-phospho-RNA)-tyrosine. Residues 1549-1727 (GPAFEFAVAM…FSAALLRHYF (179 aa)) form the Peptidase C3 domain. Residues histidine 1588, glutamate 1619, and cysteine 1695 each act as for protease 3C activity in the active site. Positions 1958 to 2074 (GHLIAFDYSG…SYPWPIDASL (117 aa)) constitute a RdRp catalytic domain. The Mg(2+) site is built by aspartate 1964 and aspartate 2060.

This sequence belongs to the picornaviruses polyprotein family. As to quaternary structure, interacts with capsid protein VP1 and capsid protein VP3 to form heterotrimeric protomers. Interacts with capsid protein VP0, and capsid protein VP3 to form heterotrimeric protomers. Five protomers subsequently associate to form pentamers which serve as building blocks for the capsid. Interacts with capsid protein VP2, capsid protein VP3 and capsid protein VP4 following cleavage of capsid protein VP0. In terms of assembly, interacts with capsid protein VP1 and capsid protein VP3 in the mature capsid. Interacts with host CD55; this interaction promotes virus attachment to the host cell and subsequent internalization. As to quaternary structure, interacts with capsid protein VP0 and capsid protein VP1 to form heterotrimeric protomers. Five protomers subsequently associate to form pentamers which serve as building blocks for the capsid. Interacts with capsid protein VP4 in the mature capsid. Interacts with protein 2C; this interaction may be important for virion morphogenesis. Interacts with host CD55; this interaction promotes virus attachment to the host cell and subsequent internalization. Interacts with capsid protein VP1 and capsid protein VP3. In terms of assembly, homodimer. As to quaternary structure, homohexamer; forms a hexameric ring structure with 6-fold symmetry characteristic of AAA+ ATPases. Interacts (via N-terminus) with host RTN3 (via reticulon domain); this interaction is important for viral replication. Interacts with capsid protein VP3; this interaction may be important for virion morphogenesis. Interacts with protein 3CD. In terms of assembly, homodimer. Interacts with host GBF1. Interacts (via GOLD domain) with host ACBD3 (via GOLD domain); this interaction allows the formation of a viral protein 3A/ACBD3 heterotetramer with a 2:2 stoichiometry, which will stimulate the recruitment of host PI4KB in order to synthesize PI4P at the viral RNA replication sites. As to quaternary structure, interacts with RNA-directed RNA polymerase. Interacts with protein 3AB and with RNA-directed RNA polymerase. In terms of assembly, interacts with Viral protein genome-linked and with protein 3CD. Mg(2+) serves as cofactor. Post-translationally, specific enzymatic cleavages in vivo by the viral proteases yield processing intermediates and the mature proteins. Myristoylation is required for the formation of pentamers during virus assembly. Further assembly of 12 pentamers and a molecule of genomic RNA generates the provirion. In terms of processing, during virion maturation, immature virions are rendered infectious following cleavage of VP0 into VP4 and VP2. This maturation seems to be an autocatalytic event triggered by the presence of RNA in the capsid and it is followed by a conformational change infectious virion. Post-translationally, myristoylation is required during RNA encapsidation and formation of the mature virus particle. VPg is uridylylated by the polymerase into VPg-pUpU. This acts as a nucleotide-peptide primer for the genomic RNA replication.

It is found in the virion. It localises to the host cytoplasm. Its subcellular location is the host cytoplasmic vesicle membrane. The protein resides in the host nucleus. It carries out the reaction a ribonucleoside 5'-triphosphate + H2O = a ribonucleoside 5'-diphosphate + phosphate + H(+). It catalyses the reaction Selective cleavage of Tyr-|-Gly bond in the picornavirus polyprotein.. The enzyme catalyses RNA(n) + a ribonucleoside 5'-triphosphate = RNA(n+1) + diphosphate. The catalysed reaction is Selective cleavage of Gln-|-Gly bond in the poliovirus polyprotein. In other picornavirus reactions Glu may be substituted for Gln, and Ser or Thr for Gly.. Replication or transcription is subject to high level of random mutations by the nucleotide analog ribavirin. In terms of biological role, forms an icosahedral capsid of pseudo T=3 symmetry with capsid proteins VP2 and VP3. The capsid is 300 Angstroms in diameter, composed of 60 copies of each capsid protein and enclosing the viral positive strand RNA genome. Capsid protein VP1 mainly forms the vertices of the capsid. Capsid protein VP1 interacts with host cell receptor to provide virion attachment to target host cells. This attachment induces virion internalization. Tyrosine kinases are probably involved in the entry process. After binding to its receptor, the capsid undergoes conformational changes. Capsid protein VP1 N-terminus (that contains an amphipathic alpha-helix) and capsid protein VP4 are externalized. Together, they shape a pore in the host membrane through which viral genome is translocated to host cell cytoplasm. Forms an icosahedral capsid of pseudo T=3 symmetry with capsid proteins VP2 and VP3. The capsid is 300 Angstroms in diameter, composed of 60 copies of each capsid protein and enclosing the viral positive strand RNA genome. Functionally, lies on the inner surface of the capsid shell. After binding to the host receptor, the capsid undergoes conformational changes. Capsid protein VP4 is released, Capsid protein VP1 N-terminus is externalized, and together, they shape a pore in the host membrane through which the viral genome is translocated into the host cell cytoplasm. Its function is as follows. Component of immature procapsids, which is cleaved into capsid proteins VP4 and VP2 after maturation. Allows the capsid to remain inactive before the maturation step. In terms of biological role, cysteine protease that cleaves viral polyprotein and specific host proteins. It is responsible for the autocatalytic cleavage between the P1 and P2 regions, which is the first cleavage occurring in the polyprotein. Also cleaves the host translation initiation factor EIF4G1, in order to shut down the capped cellular mRNA translation. Inhibits the host nucleus-cytoplasm protein and RNA trafficking by cleaving host members of the nuclear pores. Counteracts stress granule formation probably by antagonizing its assembly or promoting its dissassembly. Plays an essential role in the virus replication cycle by acting as a viroporin. Creates a pore in the host endoplasmic reticulum and as a consequence releases Ca2+ in the cytoplasm of infected cell. In turn, high levels of cytoplasmic calcium may trigger membrane trafficking and transport of viral ER-associated proteins to viroplasms, sites of viral genome replication. Functionally, induces and associates with structural rearrangements of intracellular membranes. Displays RNA-binding, nucleotide binding and NTPase activities. May play a role in virion morphogenesis and viral RNA encapsidation by interacting with the capsid protein VP3. Its function is as follows. Localizes the viral replication complex to the surface of membranous vesicles. Together with protein 3CD binds the Cis-Active RNA Element (CRE) which is involved in RNA synthesis initiation. Acts as a cofactor to stimulate the activity of 3D polymerase, maybe through a nucleid acid chaperone activity. In terms of biological role, localizes the viral replication complex to the surface of membranous vesicles. It inhibits host cell endoplasmic reticulum-to-Golgi apparatus transport and causes the disassembly of the Golgi complex, possibly through GBF1 interaction. This would result in depletion of MHC, trail receptors and IFN receptors at the host cell surface. Plays an essential role in viral RNA replication by recruiting ACBD3 and PI4KB at the viral replication sites, thereby allowing the formation of the rearranged membranous structures where viral replication takes place. Acts as a primer for viral RNA replication and remains covalently bound to viral genomic RNA. VPg is uridylylated prior to priming replication into VPg-pUpU. The oriI viral genomic sequence may act as a template for this. The VPg-pUpU is then used as primer on the genomic RNA poly(A) by the RNA-dependent RNA polymerase to replicate the viral genome. During genome replication, the VPg-RNA linkage is removed by the host TDP2, thereby accelerating replication. During the late stage of the replication cycle, host TDP2 is excluded from sites of viral RNA synthesis and encapsidation, allowing for the generation of progeny virions. Functionally, involved in the viral replication complex and viral polypeptide maturation. It exhibits protease activity with a specificity and catalytic efficiency that is different from protease 3C. Protein 3CD lacks polymerase activity. Protein 3CD binds to the 5'UTR of the viral genome. Its function is as follows. Replicates the viral genomic RNA on the surface of intracellular membranes. May form linear arrays of subunits that propagate along a strong head-to-tail interaction called interface-I. Covalently attaches UMP to a tyrosine of VPg, which is used to prime RNA synthesis. The positive stranded RNA genome is first replicated at virus induced membranous vesicles, creating a dsRNA genomic replication form. This dsRNA is then used as template to synthesize positive stranded RNA genomes. ss(+)RNA genomes are either translated, replicated or encapsidated. In terms of biological role, major viral protease that mediates proteolytic processing of the polyprotein. Cleaves host EIF5B, contributing to host translation shutoff. Also cleaves host PABPC1, contributing to host translation shutoff. Cleaves host NLRP1, triggers host N-glycine-mediated degradation of the autoinhibitory NLRP1 N-terminal fragment. The polypeptide is Genome polyprotein (Echovirus 12 (strain Travis)).